A 393-amino-acid chain; its full sequence is Protein TsgA (393 aa).

A run of 12 helical transmembrane segments spans residues 11–31, 51–71, 78–98, 101–121, 134–154, 162–182, 206–226, 245–265, 273–293, 298–318, 332–352, and 361–381; these read WISF…GMVM, FLNA…EIVP, FGFI…SLAL, AAMF…TFLI, LLFT…VAAF, WYWV…LTFG, IGVL…LGFI, ALVS…SFIL, ILTV…TGTQ, WFIL…ITLG, FILT…GPIV, and LLTA…LGFV.

Belongs to the major facilitator superfamily. TsgA family.

It localises to the cell inner membrane. In Salmonella gallinarum (strain 287/91 / NCTC 13346), this protein is Protein TsgA.